A 543-amino-acid chain; its full sequence is Nucleoside-triphosphatase ntp-1 (543 aa).

Residues 40–60 (VYGFLLTCTCLLLILTIIPMS) form a helical membrane-spanning segment. Glu-212 functions as the Proton acceptor in the catalytic mechanism. Residues 497-517 (QISNFFSFFVILIIVLAVALY) form a helical membrane-spanning segment.

It belongs to the GDA1/CD39 NTPase family.

The protein localises to the golgi apparatus membrane. The enzyme catalyses a ribonucleoside 5'-triphosphate + H2O = a ribonucleoside 5'-diphosphate + phosphate + H(+). Seems to be able to hydrolyze CTP, ATP and UTP. This Caenorhabditis elegans protein is Nucleoside-triphosphatase ntp-1.